The chain runs to 186 residues: Casparian strip membrane protein 1 (186 aa).

Topologically, residues 1-26 (MKGGSIELGEVSKNASTNKGVKRGLS) are cytoplasmic. The helical transmembrane segment at 27–47 (IMDFILRIIAGVATLASAVAM) threads the bilayer. Over 48–72 (GTTDERLPFATSFVQFRAEYDDLPS) the chain is Extracellular. The chain crosses the membrane as a helical span at residues 73–93 (FVFFVLANSIVCGYLALSLIL). Residues 94–107 (SILHIVRSTAVKSR) are Cytoplasmic-facing. The chain crosses the membrane as a helical span at residues 108–128 (ILLIVLDMVMMGLLAAAASAA). The Extracellular segment spans residues 129–157 (ASIVYIAHYGNTQANWFPICQQYNSFCER). A helical transmembrane segment spans residues 158 to 178 (ISGSLIGSYIAVALFIIIILL). Residues 179–186 (SQSAISRN) lie on the Cytoplasmic side of the membrane.

The protein belongs to the Casparian strip membrane proteins (CASP) family. In terms of assembly, homodimer and heterodimers.

The protein localises to the cell membrane. Functionally, regulates membrane-cell wall junctions and localized cell wall deposition. Required for establishment of the Casparian strip membrane domain (CSD) and the subsequent formation of Casparian strips, a cell wall modification of the root endodermis that determines an apoplastic barrier between the intraorganismal apoplasm and the extraorganismal apoplasm and prevents lateral diffusion. This Medicago truncatula (Barrel medic) protein is Casparian strip membrane protein 1.